The following is a 566-amino-acid chain: Insulinoma-associated protein 2 (566 aa).

Residues 1-20 (MPRGFLVKRTKRTGGLYRVR) are SNAG domain. The tract at residues 32 to 117 (QGAPPFLEEA…PSPSPAKPAG (86 aa)) is disordered. The segment covering 103–113 (GPSPSPSPSPA) has biased composition (pro residues). A C2H2-type 1; atypical zinc finger spans residues 263–283 (FICQLCKEQYADPFALAQHRC). A C2H2-type 2 zinc finger spans residues 291–313 (YRCPECDKVFSCPANLASHRRWH). The segment at 310–418 (RRWHKPRPAA…RRVPVPGSTS (109 aa)) is disordered. The span at 318 to 348 (AAANAATVSSADGKPPSSSSSSSRDSGAIAS) shows a compositional bias: low complexity. Over residues 352-369 (EGKENSRIERTADQHPQA) the composition is skewed to basic and acidic residues. C2H2-type zinc fingers lie at residues 426 to 448 (FVCP…LSTH), 470 to 492 (FACP…RLWH), and 525 to 548 (FSCK…NKCH).

As to expression, expressed in heart, liver, skeletal muscle, kidney and pancreas, and, to a lesser extent, in brain, lung and spleen. In the pancreas, expressed in islet cells, including insulin- and glucagon-producing alpha- and beta-cells, but not in acinar cells (at protein level). Detected in adrenal glands, particularly in the deeper layer of the cortex (at protein level).

The protein localises to the cytoplasm. It is found in the nucleus. In terms of biological role, may function as a growth suppressor or tumor suppressor in liver cells and in certain neurons. The chain is Insulinoma-associated protein 2 (INSM2) from Homo sapiens (Human).